A 96-amino-acid polypeptide reads, in one-letter code: Beta-defensin 132 (96 aa).

A signal peptide spans 1 to 22 (MKFLLLVLAALRFLTQVIPASG). Disulfide bonds link Cys27/Cys55, Cys35/Cys49, and Cys39/Cys56. The segment at 74–96 (HWQSRRRNTQRKDKKQQTTVTSS) is disordered. The span at 76 to 87 (QSRRRNTQRKDK) shows a compositional bias: basic residues.

The protein belongs to the beta-defensin family.

Its subcellular location is the secreted. Functionally, has antibacterial activity. This is Beta-defensin 132 (DEFB132) from Hylobates lar (Lar gibbon).